Here is a 348-residue protein sequence, read N- to C-terminus: tRNA N6-adenosine threonylcarbamoyltransferase (348 aa).

The Fe cation site is built by histidine 111 and histidine 115. Substrate is bound by residues 134-138 (LVSGG), aspartate 167, glycine 180, aspartate 184, and asparagine 280. Residue aspartate 308 coordinates Fe cation.

The protein belongs to the KAE1 / TsaD family. The cofactor is Fe(2+).

It localises to the cytoplasm. The enzyme catalyses L-threonylcarbamoyladenylate + adenosine(37) in tRNA = N(6)-L-threonylcarbamoyladenosine(37) in tRNA + AMP + H(+). Required for the formation of a threonylcarbamoyl group on adenosine at position 37 (t(6)A37) in tRNAs that read codons beginning with adenine. Is involved in the transfer of the threonylcarbamoyl moiety of threonylcarbamoyl-AMP (TC-AMP) to the N6 group of A37, together with TsaE and TsaB. TsaD likely plays a direct catalytic role in this reaction. This chain is tRNA N6-adenosine threonylcarbamoyltransferase, found in Rippkaea orientalis (strain PCC 8801 / RF-1) (Cyanothece sp. (strain PCC 8801)).